Here is a 120-residue protein sequence, read N- to C-terminus: NAD(P)H-quinone oxidoreductase subunit 3, chloroplastic (120 aa).

Helical transmembrane passes span 9–29 (IFWA…LISG), 64–84 (MFAL…PWAM), and 88–108 (VLGV…ILGL).

This sequence belongs to the complex I subunit 3 family. In terms of assembly, NDH is composed of at least 16 different subunits, 5 of which are encoded in the nucleus.

It localises to the plastid. It is found in the chloroplast thylakoid membrane. The enzyme catalyses a plastoquinone + NADH + (n+1) H(+)(in) = a plastoquinol + NAD(+) + n H(+)(out). The catalysed reaction is a plastoquinone + NADPH + (n+1) H(+)(in) = a plastoquinol + NADP(+) + n H(+)(out). NDH shuttles electrons from NAD(P)H:plastoquinone, via FMN and iron-sulfur (Fe-S) centers, to quinones in the photosynthetic chain and possibly in a chloroplast respiratory chain. The immediate electron acceptor for the enzyme in this species is believed to be plastoquinone. Couples the redox reaction to proton translocation, and thus conserves the redox energy in a proton gradient. This chain is NAD(P)H-quinone oxidoreductase subunit 3, chloroplastic, found in Arabidopsis thaliana (Mouse-ear cress).